Consider the following 495-residue polypeptide: Alkaline protease 2 (495 aa).

Residues 1–16 form the signal peptide; the sequence is MKGYLSLSILPLLVAA. The propeptide occupies 17 to 136; the sequence is SPVVVDSIHN…IEKDSEVHTM (120 aa). The 94-residue stretch at 43–136 folds into the Inhibitor I9 domain; sequence SYIVVFKKHV…IEKDSEVHTM (94 aa). The Peptidase S8 domain occupies 146–452; that stretch reads PWGLARISHR…GGSSNYTDII (307 aa). Catalysis depends on charge relay system residues Asp182 and His214. Asn284 carries N-linked (GlcNAc...) asparagine glycosylation. Catalysis depends on Ser380, which acts as the Charge relay system. Asn447 and Asn460 each carry an N-linked (GlcNAc...) asparagine glycan.

The protein belongs to the peptidase S8 family.

It catalyses the reaction Hydrolysis of proteins with broad specificity, and of Bz-Arg-OEt &gt; Ac-Tyr-OEt. Does not hydrolyze peptide amides.. In terms of biological role, alkaline protease that allows assimilation of proteinaceous substrates. Acts as a significant virulence factor in invasive aspergillosis. Required for regular sporulation. The sequence is that of Alkaline protease 2 (alp2) from Aspergillus fumigatus (strain CBS 144.89 / FGSC A1163 / CEA10) (Neosartorya fumigata).